The primary structure comprises 710 residues: MPVRRYGGRYNSSSPGVSNALNPSRTAGWPLSPSPATGSKPASTHHDPVPQEAYYVKDEADARHQQQAPLREPSVEVEVEIIDDEPPRGSQKPLSVAPCTANANNSSGGSKCNAITASRYTFYTNAYQKSVYEALRSLRPLPELQEPRRVKEYAETSLKDSLYRIVEAHDVIMVAGAFFGDEGKGKTVDAVARHPLCTCIARVNSGENAGHTVYDKAGRKFVFNLAPSGLLLPGKRNYIGPECVMDPVSFMEKEVIQLIDAGIDYRDRLFIGNVCIVTPYHKLLDLLGSAANSSTLKGMAPVHGSKVMKRGIRLDHIFNDDETLRKRLEKDMDTYFGLLKVKNLSDADVVRLCREENSDGVVRVPDYVIAFAQAEDKVEFLVKLYRDRVRHNPGFPARCDVTYELHAALLRGEKVLLEGPQSYWLSNARTKFWESTTSADTTAAGLLAASQLNFQKFKSVVLNVHKAPGSSRVGIGACPSSFVPQDYFSAQNIKTLRDLPSATCAHFEAVQRTLFRDGFPHSNDKARHNGIMAPVEYSDETGTYNIGVAMAIASAQHHGECGAVTKKPRVCGFFDCVLHHEVNNIQGPYLTISALDRGDEYDKVGVTIAYVYYSPEGKQVDVNGHVYKNGDIIRAGDPVPSEPALYHCHPIVKLIDGWRDNPIAAAKRRRNAPLPRGVCELLSAIEYFTNCKILSIGNGPNGDDIIYLRQ.

The interval 1–54 (MPVRRYGGRYNSSSPGVSNALNPSRTAGWPLSPSPATGSKPASTHHDPVPQEAY) is disordered. Over residues 10-25 (YNSSSPGVSNALNPSR) the composition is skewed to polar residues. Basic and acidic residues predominate over residues 44–54 (THHDPVPQEAY). GTP-binding positions include 180–186 (GDEGKGK) and 210–212 (GHT). Aspartate 181 acts as the Proton acceptor in catalysis. Mg(2+) contacts are provided by aspartate 181 and glycine 210. Residues 181–184 (DEGK), 208–211 (NAGH), threonine 295, lysine 309, glutamine 421, threonine 437, and lysine 567 contribute to the IMP site. The active-site Proton donor is the histidine 211. Substrate is bound at residue 563–569 (AVTKKPR). Residues arginine 569 and 697–699 (GNG) each bind GTP.

Belongs to the adenylosuccinate synthetase family. As to quaternary structure, homodimer. Mg(2+) serves as cofactor.

It is found in the cytoplasm. The enzyme catalyses IMP + L-aspartate + GTP = N(6)-(1,2-dicarboxyethyl)-AMP + GDP + phosphate + 2 H(+). It participates in purine metabolism; AMP biosynthesis via de novo pathway; AMP from IMP: step 1/2. In terms of biological role, plays an important role in the salvage pathway for purine nucleotide biosynthesis. Catalyzes the first committed step in the biosynthesis of AMP from IMP. In Leishmania major, this protein is Adenylosuccinate synthetase.